The chain runs to 363 residues: Cinnamyl alcohol dehydrogenase 2 (363 aa).

Position 47 (C47) interacts with Zn(2+). T49 lines the NADP(+) pocket. Zn(2+) is bound by residues H69, E70, C100, C103, C106, C114, and C163. Residues T167, 188 to 193 (GLGGVG), 211 to 216 (SSSARK), T251, G275, and 298 to 300 (SFI) contribute to the NADP(+) site.

The protein belongs to the zinc-containing alcohol dehydrogenase family. In terms of assembly, homodimer. The cofactor is Zn(2+). In terms of tissue distribution, expressed in roots behind the root tips in the pericycle region and layer of cortical cells adjacent to the exodermis. Expressed in vascular bundles and lateral veins of leaf sheaths and blades. Expressed in the vicinity of vascular bundles in the first internode below the inflorescence. Highly expressed in the culm.

It carries out the reaction (E)-cinnamyl alcohol + NADP(+) = (E)-cinnamaldehyde + NADPH + H(+). The enzyme catalyses (E)-coniferol + NADP(+) = (E)-coniferaldehyde + NADPH + H(+). It catalyses the reaction (E)-sinapyl alcohol + NADP(+) = (E)-sinapaldehyde + NADPH + H(+). The catalysed reaction is (E)-4-coumaroyl alcohol + NADP(+) = (E)-4-coumaraldehyde + NADPH + H(+). It carries out the reaction (E)-caffeyl alcohol + NADP(+) = (E)-caffeyl aldehyde + NADPH + H(+). Its pathway is aromatic compound metabolism; phenylpropanoid biosynthesis. Involved in lignin biosynthesis. Catalyzes the final step specific for the production of lignin monomers. Catalyzes the NADPH-dependent reduction of coniferaldehyde and sinapaldehyde to their respective alcohols. Plays the major role in monolignol biosynthesis. Functions cooperatively with COMT in the culm internodes for the biosynthesis of monolignols, the lignin precursors. May be involved in lignin biosynthesis in leaves and roots. The chain is Cinnamyl alcohol dehydrogenase 2 from Oryza sativa subsp. japonica (Rice).